We begin with the raw amino-acid sequence, 256 residues long: Small ribosomal subunit protein uS2 (256 aa).

This sequence belongs to the universal ribosomal protein uS2 family.

This chain is Small ribosomal subunit protein uS2, found in Geotalea uraniireducens (strain Rf4) (Geobacter uraniireducens).